The primary structure comprises 618 residues: MPIQVLPPQLANQIAAGEVVERPASVVKELVENSLDAGATRVDIDIERGGAKLIRIRDNGCGIKKEELALALARHATSKIASLDDLEAIISLGFRGEALASISSVSRLTLTSRTAEQAEAWQAYAEGRDMDVTVKPAAHPVGTTLEVLDLFYNTPARRKFMRTEKTEFNHIDEIIRRIALARFDVTLNLSHNGKLVRQYRAVAKDGQKERRLGAICGTPFLEQALAIEWQHGDLTLRGWVADPNHTTTALTEIQYCYVNGRMMRDRLINHAIRQACEDKLGADQQPAFVLYLEIDPHQVDVNVHPAKHEVRFHQSRLVHDFIYQGVLSVLQQQTETTLPLEDIAPAPRHVPENRIAAGRNHFAVPAEPTAAREPATPRYSGGTSGGNGGRQSAGGWPHAQPGYQKPQGEVYRTLLQTPATSPAPEPVAPALDGHSQSFGRVLTIVGGDCALLEHAGTIQLLSLPVAERWLRQAQLTPGQSPVCAQPLLIPLRLKVSADEKAALQQAQSLLGELGIEFQSDAQHVTIRAVPLPLRQQNLQILIPELIGYLAQQTTFATVNIAQWIARNVQSEHPQWSMAQAISLLADVERLCPQLVKAPPGGLLQPVDLHSAMNALKHE.

Over residues Ala366–Gly381 the composition is skewed to low complexity. A disordered region spans residues Ala366 to Lys405. Positions Gly382–Ser392 are enriched in gly residues.

The protein belongs to the DNA mismatch repair MutL/HexB family.

In terms of biological role, this protein is involved in the repair of mismatches in DNA. It is required for dam-dependent methyl-directed DNA mismatch repair. May act as a 'molecular matchmaker', a protein that promotes the formation of a stable complex between two or more DNA-binding proteins in an ATP-dependent manner without itself being part of a final effector complex. The polypeptide is DNA mismatch repair protein MutL (Salmonella agona (strain SL483)).